A 122-amino-acid chain; its full sequence is Large ribosomal subunit protein uL14 (122 aa).

This sequence belongs to the universal ribosomal protein uL14 family. In terms of assembly, part of the 50S ribosomal subunit. Forms a cluster with proteins L3 and L19. In the 70S ribosome, L14 and L19 interact and together make contacts with the 16S rRNA in bridges B5 and B8.

In terms of biological role, binds to 23S rRNA. Forms part of two intersubunit bridges in the 70S ribosome. In Helicobacter pylori (strain J99 / ATCC 700824) (Campylobacter pylori J99), this protein is Large ribosomal subunit protein uL14.